Here is a 264-residue protein sequence, read N- to C-terminus: ATP synthase subunit a (264 aa).

The next 6 membrane-spanning stretches (helical) occupy residues 32 to 52 (IDSL…FHSV), 89 to 109 (VIAP…FMDM), 134 to 154 (DLNI…YYSI), 177 to 197 (IPVN…SLAL), 208 to 228 (LIFI…TLGV), and 235 to 255 (LIFH…LTIV).

The protein belongs to the ATPase A chain family. As to quaternary structure, F-type ATPases have 2 components, CF(1) - the catalytic core - and CF(0) - the membrane proton channel. CF(1) has five subunits: alpha(3), beta(3), gamma(1), delta(1), epsilon(1). CF(0) has three main subunits: a(1), b(2) and c(9-12). The alpha and beta chains form an alternating ring which encloses part of the gamma chain. CF(1) is attached to CF(0) by a central stalk formed by the gamma and epsilon chains, while a peripheral stalk is formed by the delta and b chains.

Its subcellular location is the cell inner membrane. Its function is as follows. Key component of the proton channel; it plays a direct role in the translocation of protons across the membrane. The sequence is that of ATP synthase subunit a from Shewanella piezotolerans (strain WP3 / JCM 13877).